We begin with the raw amino-acid sequence, 505 residues long: Dolichyl pyrophosphate Glc1Man9GlcNAc2 alpha-1,3-glucosyltransferase (505 aa).

The Lumenal segment spans residues 1-3 (MAE). Residues 4–24 (IYPSLVQCAIVATAFKVLLFP) form a helical membrane-spanning segment. At 25 to 101 (AYKSTDFEVH…DSWQTVYFQR (77 aa)) the chain is on the cytoplasmic side. Residues 102–122 (WTVIVTELVLLYALQMFVDST) traverse the membrane as a helical segment. The Lumenal segment spans residues 123–128 (PGVSKR). A helical transmembrane segment spans residues 129-149 (AAHAAAVSILLSPGLLIIDHI). At 150-152 (HFQ) the chain is on the cytoplasmic side. Residues 153 to 169 (YNGVMYGILIASLVLAK) traverse the membrane as a helical segment. The Lumenal portion of the chain corresponds to 170–173 (KKSS). A helical transmembrane segment spans residues 174–194 (LLASGLVFAALLCMKHIYLYL). Residues 195–224 (APAYFVYLLRVYCLPPKLSPRSIFRIQFFN) lie on the Cytoplasmic side of the membrane. A helical transmembrane segment spans residues 225 to 245 (CVKLGGGIAAIFAAAFGPFAL). Topologically, residues 246-319 (KNQIPQIFSR…TSFAVLPDIT (74 aa)) are lumenal. The helical transmembrane segment at 320–340 (PRMCFVLTLLFQAIPLIKLFM) threads the bilayer. At 341–359 (RPTWEGFIGGVTLCGYASF) the chain is on the cytoplasmic side. A helical transmembrane segment spans residues 360–380 (LFGWHVHEKAILLVIIPFSLI). The Lumenal segment spans residues 381-386 (ALKDRR). A helical transmembrane segment spans residues 387-407 (YLGAFRPLAVAGHVSLFPLIF). Residues 408-409 (TP) are Cytoplasmic-facing. A helical membrane pass occupies residues 410-430 (AEFPIKTVYTIFWLVLFLMAF). At 431–450 (DRLAPAPTRQRLFLFDRFST) the chain is on the lumenal side. The helical transmembrane segment at 451–471 (AYITVSIPLIFYCSLMHGIIF) threads the bilayer. Topologically, residues 472-480 (GKSYEFLPL) are cytoplasmic. Residues 481–501 (MFTSSYSAIGVVGSWLGFMVV) form a helical membrane-spanning segment. Residues 502–505 (YFTE) are Lumenal-facing.

This sequence belongs to the ALG6/ALG8 glucosyltransferase family.

The protein resides in the endoplasmic reticulum membrane. It carries out the reaction an alpha-D-Glc-(1-&gt;3)-alpha-D-Man-(1-&gt;2)-alpha-D-Man-(1-&gt;2)-alpha-D-Man-(1-&gt;3)-[alpha-D-Man-(1-&gt;2)-alpha-D-Man-(1-&gt;3)-[alpha-D-Man-(1-&gt;2)-alpha-D-Man-(1-&gt;6)]-alpha-D-Man-(1-&gt;6)]-beta-D-Man-(1-&gt;4)-beta-D-GlcNAc-(1-&gt;4)-alpha-D-GlcNAc-diphospho-di-trans,poly-cis-dolichol + a di-trans,poly-cis-dolichyl beta-D-glucosyl phosphate = an alpha-D-Glc-(1-&gt;3)-alpha-D-Glc-(1-&gt;3)-alpha-D-Man-(1-&gt;2)-alpha-D-Man-(1-&gt;2)-alpha-D-Man-(1-&gt;3)-[alpha-D-Man-(1-&gt;2)-alpha-D-Man-(1-&gt;3)-[alpha-D-Man-(1-&gt;2)-alpha-D-Man-(1-&gt;6)]-alpha-D-Man-(1-&gt;6)]-beta-D-Man-(1-&gt;4)-beta-D-GlcNAc-(1-&gt;4)-alpha-D-GlcNAc-diphospho-di-trans,poly-cis-dolichol + a di-trans,poly-cis-dolichyl phosphate + H(+). It functions in the pathway protein modification; protein glycosylation. Dolichyl pyrophosphate Glc1Man9GlcNAc2 alpha-1,3-glucosyltransferase that operates in the biosynthetic pathway of dolichol-linked oligosaccharides, the glycan precursors employed in protein asparagine (N)-glycosylation. The assembly of dolichol-linked oligosaccharides begins on the cytosolic side of the endoplasmic reticulum membrane and finishes in its lumen. The sequential addition of sugars to dolichol pyrophosphate produces dolichol-linked oligosaccharides containing fourteen sugars, including two GlcNAcs, nine mannoses and three glucoses. Once assembled, the oligosaccharide is transferred from the lipid to nascent proteins by oligosaccharyltransferases. In the lumen of the endoplasmic reticulum, adds the second glucose residue from dolichyl phosphate glucose (Dol-P-Glc) onto the lipid-linked oligosaccharide intermediate Glc(1)Man(9)GlcNAc(2)-PP-Dol to produce Glc(2)Man(9)GlcNAc(2)-PP-Dol. This is Dolichyl pyrophosphate Glc1Man9GlcNAc2 alpha-1,3-glucosyltransferase (alg-8) from Neurospora crassa (strain ATCC 24698 / 74-OR23-1A / CBS 708.71 / DSM 1257 / FGSC 987).